Reading from the N-terminus, the 193-residue chain is Ion-translocating oxidoreductase complex subunit A (193 aa).

The next 6 membrane-spanning stretches (helical) occupy residues 5–25, 39–59, 72–92, 102–122, 134–154, and 170–190; these read LLLL…FLGL, VGMG…AYLV, LSTL…EMVI, ILGI…LALL, VVYG…FASL, and IAIG…FTGL.

This sequence belongs to the NqrDE/RnfAE family. In terms of assembly, the complex is composed of six subunits: RnfA, RnfB, RnfC, RnfD, RnfE and RnfG.

Its subcellular location is the cell inner membrane. In terms of biological role, part of a membrane-bound complex that couples electron transfer with translocation of ions across the membrane. The protein is Ion-translocating oxidoreductase complex subunit A of Tolumonas auensis (strain DSM 9187 / NBRC 110442 / TA 4).